The sequence spans 73 residues: Translation initiation factor IF-1 (73 aa).

Positions M1–K73 constitute an S1-like domain.

This sequence belongs to the IF-1 family. In terms of assembly, component of the 30S ribosomal translation pre-initiation complex which assembles on the 30S ribosome in the order IF-2 and IF-3, IF-1 and N-formylmethionyl-tRNA(fMet); mRNA recruitment can occur at any time during PIC assembly.

The protein resides in the cytoplasm. Its function is as follows. One of the essential components for the initiation of protein synthesis. Stabilizes the binding of IF-2 and IF-3 on the 30S subunit to which N-formylmethionyl-tRNA(fMet) subsequently binds. Helps modulate mRNA selection, yielding the 30S pre-initiation complex (PIC). Upon addition of the 50S ribosomal subunit IF-1, IF-2 and IF-3 are released leaving the mature 70S translation initiation complex. The chain is Translation initiation factor IF-1 from Anaeromyxobacter sp. (strain Fw109-5).